Consider the following 134-residue polypeptide: Small ribosomal subunit protein uS9c (134 aa).

Positions Asp105–Ala114 are enriched in basic and acidic residues. Residues Asp105–Arg134 are disordered. The segment covering Lys115–Arg134 has biased composition (basic residues).

It belongs to the universal ribosomal protein uS9 family.

Its subcellular location is the plastid. It localises to the cyanelle. This chain is Small ribosomal subunit protein uS9c (rps9), found in Cyanophora paradoxa.